A 739-amino-acid chain; its full sequence is Nucleoprotein (739 aa).

The oligomerization, N-terminal arm stretch occupies residues 1-25 (MDSRPQKIWMAPSLTESDMDYHKIL). The tract at residues 26 to 405 (TAGLSVQQGI…TLRKERLAKL (380 aa)) is NP core. Residues 415–647 (PKTSGHYDDD…DSDNTQSEHS (233 aa)) are disordered. Composition is skewed to low complexity over residues 449 to 458 (SQDTTIPDVV) and 504 to 514 (KGGQQKNSQKG). The Host PPP2R5C-binding motif motif lies at 562 to 567 (LTPINE). The segment covering 567-579 (EEADPLDDADDET) has biased composition (acidic residues). The VP30-binding motif motif lies at 606-611 (PPAPVY). Residues 611 to 638 (YRDHSEKKELPQDEQQDQDHTQEARNQD) are compositionally biased toward basic and acidic residues.

It belongs to the filoviruses nucleoprotein family. Homooligomer. Homomultimerizes to form the nucleocapsid. Binds to viral genomic RNA. Interacts with VP35 and VP30 to form the nucleocapsid. Interacts with host PPP2R5C; this interaction leads to VP30 dephosphorylation and viral transcription. Interacts with VP24; this interaction facilitates nucleocapsid assembly and genome packaging. Interacts with matrix protein VP40; this interaction allows recruitment of the nucleocapsid into progeny virions. Interacts with host STAU1. Interacts with host NXF1 (via RNA-binding domain); this interaction recruits NXF1 to the inclusion bodies were viral replication takes place, probably to export viral mRNA-NXF1 complexes from these sites. Interacts with host CCDC92; this interaction sequesters NP in the host cytoplasm. Interacts with host TRIM14. Phosphorylated by host. Post-translationally, O-glycosylated by host. In terms of processing, acetylated by host EP300 in vitro.

The protein localises to the virion. Its subcellular location is the host cytoplasm. In terms of biological role, oligomerizes into helical capsid to encapsidate the viral genome, protecting it from nucleases and the cellular innate immune response. VP35 binds to and stabilizes monomeric NP, keeping it soluble. Upon virus replication, NP is recruited to bind cooperatively viral genomic RNA and VP35 is released. The encapsidated genomic RNA is termed the nucleocapsid and serves as template for transcription and replication. The nucleocapsid is helical with a pitch of 10.81 NP per turn and a diameter of about 22nm. Each NP binds to six nucleotides of viral genomic RNA, three being exposed to the solvant and three hidden into the nucleocapsid. Also recruits host PPP2R5C phosphatase to dephosphorylate VP30 and thereby promote viral transcription. Upon virion assembly and budding, NP binds to VP24 and possibly host STAU1. In Epomops franqueti (Franquet's epauletted fruit bat), this protein is Nucleoprotein (NP).